We begin with the raw amino-acid sequence, 360 residues long: Tubulin-like protein CetZ2 (360 aa).

Residues 10–14, 65–66, 106–108, glutamate 138, asparagine 165, and asparagine 183 each bind GTP; these read QAGGK, GG, and GSG. Basic and acidic residues predominate over residues 334-354; it reads EAIDKAETEPREDPKGMWHSD. The disordered stretch occupies residues 334–360; the sequence is EAIDKAETEPREDPKGMWHSDDLDDLL.

This sequence belongs to the CetZ family.

The protein localises to the cytoplasm. Its function is as follows. Involved in cell shape control. The protein is Tubulin-like protein CetZ2 of Haloferax volcanii (strain ATCC 29605 / DSM 3757 / JCM 8879 / NBRC 14742 / NCIMB 2012 / VKM B-1768 / DS2) (Halobacterium volcanii).